The primary structure comprises 336 residues: NmrA-like family domain-containing oxidoreductase FrzB (336 aa).

Position 135 (lysine 135) interacts with NADP(+).

Belongs to the NmrA-type oxidoreductase family.

The catalysed reaction is 4-{[(2S,5S)-5-[(4-hydroxyphenyl)methyl]-2,5-dihydropyrazin-2-yl]methyl}phenol + 2 NADPH + 2 H(+) = (S,S)-2,5-di-(p-hydroxybenzyl)piperazine + 2 NADP(+). The protein operates within secondary metabolite biosynthesis. NmrA-like family domain-containing oxidoreductase; part of the gene cluster that mediates the biosynthesis of the alkaloid (-)-FR901483, a potent immunosuppressant that shows efficacy in animal models and a probable inhibitor of purine nucleotide biosynthesis by targeting phosphoribosylpyrophosphate amidotransferase (PPAT). Within the pathway, FrzB catalyzes the reduction of 4-{[(2S,5S)-5-[(4-hydroxyphenyl)methyl]-2,5-dihydropyrazin-2-yl]methyl}phenol to produce the (S,S)-dityrosyl-piperazine intermediate. The biosynthesis of (-)-FR901483 starts with the condensation of two L-tyrosines to yield (S,S)-dityrosyl-piperazine. This process occurs in 3 steps with the non-canonical nonribosomal peptide synthetase FrzA catalyzing the reduction of L-tyrosine into L-tyrosinal, the spontaneous condensation of 2 L-tyrosinal units, and the subsequent reduction by the NmrA-like family domain-containing oxidoreductase FrzB. The cytochrome P450 monooxygenase FrzC then performs coupling between N10 and C1' to morph the piperazine into a 1,4-diazabicyclo[3.2.1]octane spiro-fused to a 2,5-cyclohexadienone. The dienone portion is further reduced to cyclohexanone by the flavin-dependent reductase FrzD. The methyltranserases (MTs) FrzE and FrzF are then involved in the methylation at the C10' amine and the C4 phenolic oxygen, respectively. The order of the two MTs appear to be interchangeable. Cleavage of the C9-N10' bond by the dioxygenase FrzG then leads to formation of a conjugated iminium. In addition to the oxidation of C9, an additional dehydrogenation between C7 and C8 can occur to give a likely shunt product. The next biosynthetic step is the intramolecular aldol condensation catalyzed by the newly identified aldolase FrzH to yield an aza-tricyclic product with the formation of a C9-C3' bond. The short-chain dehydrogenase/reductase FrzI then produces dephospho-(-)-FR901483 that is phosphorylated at C4'-OH into (-)-FR901483 by the phosphotransferase FrzJ. The sequence is that of NmrA-like family domain-containing oxidoreductase FrzB from Cladobotryum sp.